The primary structure comprises 336 residues: Atypical chemokine receptor 1 (336 aa).

The Extracellular segment spans residues 1–63 (MGNCLHPAEL…CNLLDDSALP (63 aa)). Asn16, Asn27, and Asn33 each carry an N-linked (GlcNAc...) asparagine glycan. 2 disulfides stabilise this stretch: Cys51–Cys276 and Cys129–Cys195. A helical membrane pass occupies residues 64 to 84 (FFILVSVLGILASGIVLFMFF). Over 85-95 (RPLFHWQLCPG) the chain is Cytoplasmic. Residues 96–116 (WPVLAQLAVGSALFSIVVPIL) traverse the membrane as a helical segment. The Extracellular segment spans residues 117–129 (APGLGNTRSSALC). The helical transmembrane segment at 130–153 (SLGYCVWYGSAFAQALLLGCHASL) threads the bilayer. The Cytoplasmic segment spans residues 154–166 (GPKLGADQVPGLT). Residues 167–187 (LGLSVGLWGVAALLTLPVTLA) form a helical membrane-spanning segment. Topologically, residues 188-207 (SGASGGLCTPVYSMELKALQ) are extracellular. A helical transmembrane segment spans residues 208–228 (ATHAVACLAIFVLLPLGLFGA). At 229-244 (KGLKKALGMGPGPWMN) the chain is on the cytoplasmic side. Residues 245-265 (ILWAWFIFWWPHGVVLGLDFL) form a helical membrane-spanning segment. The Extracellular portion of the chain corresponds to 266–287 (VRSKLLLLSTCLAQQALDLLLN). The helical transmembrane segment at 288–308 (LAEALAILHCVATPLLLALFC) threads the bilayer. The Cytoplasmic segment spans residues 309-336 (HQATRTLLPSLPLPEGWSSHLDTLGSKS).

The protein belongs to the G-protein coupled receptor 1 family. Atypical chemokine receptor subfamily.

Its subcellular location is the early endosome. The protein localises to the recycling endosome. The protein resides in the membrane. Its function is as follows. Atypical chemokine receptor that controls chemokine levels and localization via high-affinity chemokine binding that is uncoupled from classic ligand-driven signal transduction cascades, resulting instead in chemokine sequestration, degradation, or transcytosis. Also known as interceptor (internalizing receptor) or chemokine-scavenging receptor or chemokine decoy receptor. Has a promiscuous chemokine-binding profile, interacting with inflammatory chemokines of both the CXC and the CC subfamilies but not with homeostatic chemokines. Acts as a receptor for chemokines including CCL2, CCL5, CCL7, CCL11, CCL13, CCL14, CCL17, CXCL5, CXCL6, IL8/CXCL8, CXCL11, GRO, RANTES, MCP-1 and TARC. May regulate chemokine bioavailability and, consequently, leukocyte recruitment through two distinct mechanisms: when expressed in endothelial cells, it sustains the abluminal to luminal transcytosis of tissue-derived chemokines and their subsequent presentation to circulating leukocytes; when expressed in erythrocytes, serves as blood reservoir of cognate chemokines but also as a chemokine sink, buffering potential surges in plasma chemokine levels. The polypeptide is Atypical chemokine receptor 1 (ACKR1) (Papio hamadryas (Hamadryas baboon)).